Here is a 373-residue protein sequence, read N- to C-terminus: 4-hydroxy-3-methylbut-2-en-1-yl diphosphate synthase (flavodoxin) (373 aa).

The [4Fe-4S] cluster site is built by Cys-270, Cys-273, Cys-305, and Glu-312.

This sequence belongs to the IspG family. It depends on [4Fe-4S] cluster as a cofactor.

The catalysed reaction is (2E)-4-hydroxy-3-methylbut-2-enyl diphosphate + oxidized [flavodoxin] + H2O + 2 H(+) = 2-C-methyl-D-erythritol 2,4-cyclic diphosphate + reduced [flavodoxin]. Its pathway is isoprenoid biosynthesis; isopentenyl diphosphate biosynthesis via DXP pathway; isopentenyl diphosphate from 1-deoxy-D-xylulose 5-phosphate: step 5/6. Its function is as follows. Converts 2C-methyl-D-erythritol 2,4-cyclodiphosphate (ME-2,4cPP) into 1-hydroxy-2-methyl-2-(E)-butenyl 4-diphosphate. This Pectobacterium atrosepticum (strain SCRI 1043 / ATCC BAA-672) (Erwinia carotovora subsp. atroseptica) protein is 4-hydroxy-3-methylbut-2-en-1-yl diphosphate synthase (flavodoxin).